Reading from the N-terminus, the 230-residue chain is UPF0173 metal-dependent hydrolase Rsph17025_2229 (230 aa).

It belongs to the UPF0173 family.

In Cereibacter sphaeroides (strain ATCC 17025 / ATH 2.4.3) (Rhodobacter sphaeroides), this protein is UPF0173 metal-dependent hydrolase Rsph17025_2229.